The sequence spans 106 residues: NADH-quinone oxidoreductase subunit K (106 aa).

The next 3 membrane-spanning stretches (helical) occupy residues 8-28, 35-55, and 66-86; these read IGIE…VFGV, IIVF…FVAF, and VFVF…LAIL.

It belongs to the complex I subunit 4L family. NDH-1 is composed of 14 different subunits. Subunits NuoA, H, J, K, L, M, N constitute the membrane sector of the complex.

It localises to the cell inner membrane. It catalyses the reaction a quinone + NADH + 5 H(+)(in) = a quinol + NAD(+) + 4 H(+)(out). In terms of biological role, NDH-1 shuttles electrons from NADH, via FMN and iron-sulfur (Fe-S) centers, to quinones in the respiratory chain. The immediate electron acceptor for the enzyme in this species is believed to be a menaquinone. Couples the redox reaction to proton translocation (for every two electrons transferred, four hydrogen ions are translocated across the cytoplasmic membrane), and thus conserves the redox energy in a proton gradient. This chain is NADH-quinone oxidoreductase subunit K, found in Flavobacterium johnsoniae (strain ATCC 17061 / DSM 2064 / JCM 8514 / BCRC 14874 / CCUG 350202 / NBRC 14942 / NCIMB 11054 / UW101) (Cytophaga johnsonae).